The sequence spans 338 residues: Pyridoxal 5'-phosphate synthase subunit PdxS (338 aa).

Aspartate 66 is a D-ribose 5-phosphate binding site. Lysine 123 serves as the catalytic Schiff-base intermediate with D-ribose 5-phosphate. D-ribose 5-phosphate is bound at residue glycine 195. Lysine 207 is a binding site for D-glyceraldehyde 3-phosphate. D-ribose 5-phosphate is bound by residues glycine 256 and 277-278; that span reads GS.

The protein belongs to the PdxS/SNZ family. In the presence of PdxT, forms a dodecamer of heterodimers.

The enzyme catalyses aldehydo-D-ribose 5-phosphate + D-glyceraldehyde 3-phosphate + L-glutamine = pyridoxal 5'-phosphate + L-glutamate + phosphate + 3 H2O + H(+). The protein operates within cofactor biosynthesis; pyridoxal 5'-phosphate biosynthesis. Catalyzes the formation of pyridoxal 5'-phosphate from ribose 5-phosphate (RBP), glyceraldehyde 3-phosphate (G3P) and ammonia. The ammonia is provided by the PdxT subunit. Can also use ribulose 5-phosphate and dihydroxyacetone phosphate as substrates, resulting from enzyme-catalyzed isomerization of RBP and G3P, respectively. This Saccharolobus islandicus (strain L.S.2.15 / Lassen #1) (Sulfolobus islandicus) protein is Pyridoxal 5'-phosphate synthase subunit PdxS.